Consider the following 483-residue polypeptide: UDP-glycosyltransferase 85C1 (483 aa).

Residues Ser304, 360 to 361 (WC), 378 to 386 (HCGWGSIIE), and 400 to 403 (IGDQ) each bind UDP-alpha-D-glucose.

Belongs to the UDP-glycosyltransferase family.

Functionally, may glycosylate diterpenes or flavonols in leaves. The polypeptide is UDP-glycosyltransferase 85C1 (Stevia rebaudiana (Stevia)).